A 628-amino-acid chain; its full sequence is Monoterpene synthase like 2, chloroplastic (628 aa).

Positions 379, 383, and 531 each coordinate Mg(2+). The DDXXD motif motif lies at 379–383; that stretch reads DDIYD.

Belongs to the terpene synthase family. Tpsd subfamily. Requires Mg(2+) as cofactor. It depends on Mn(2+) as a cofactor.

It is found in the plastid. The protein resides in the chloroplast. It participates in terpene metabolism; oleoresin biosynthesis. It functions in the pathway secondary metabolite biosynthesis; terpenoid biosynthesis. Its function is as follows. Monoterpene synthase (TPS) involved in the biosynthesis of monoterpene natural products included in conifer oleoresin secretions and volatile emissions; these compounds contribute to biotic and abiotic stress defense against herbivores and pathogens. The chain is Monoterpene synthase like 2, chloroplastic from Pinus banksiana (Jack pine).